Consider the following 635-residue polypeptide: Sulfite reductase [ferredoxin], chloroplastic (635 aa).

The transit peptide at 1–50 (MSGAIGGAEVHGFRGAAAQLPRSRVLGRPIRVAPPAAARPGGASAGSIRA) directs the protein to the chloroplast. Disordered regions lie at residues 31-50 (RVAP…SIRA) and 245-267 (PEVT…PEPI). Over residues 245 to 254 (PEVTKARNDN) the composition is skewed to basic and acidic residues. [4Fe-4S] cluster is bound by residues C494, C500, C540, and C544. C544 contributes to the siroheme binding site.

The protein belongs to the nitrite and sulfite reductase 4Fe-4S domain family. As to quaternary structure, monomer. Interacts with ferredoxin. Requires siroheme as cofactor. [4Fe-4S] cluster serves as cofactor. Phosphorylated; this phosphorylation reduces DNA-binding. In terms of tissue distribution, present in roots and leaves (at protein level). In leaves, sulfite reductase activity is detected in both bundle sheath and mesophyll cell types.

The protein localises to the plastid. It localises to the chloroplast stroma. The protein resides in the chloroplast nucleoid. It is found in the plastid stroma. It carries out the reaction hydrogen sulfide + 6 oxidized [2Fe-2S]-[ferredoxin] + 3 H2O = sulfite + 6 reduced [2Fe-2S]-[ferredoxin] + 7 H(+). With respect to regulation, inhibited by the tryptophan-modifying reagent, N-bromosuccinimide (NBS), by the lysine-modifying reagent, N-acetylsuccinimide and by the arginine-modifying reagent, phenylglyoxal. Complex formation with ferredoxin prevents these inhibitions. Essential protein with sulfite reductase activity required in assimilatory sulfate reduction pathway during both primary and secondary metabolism and thus involved in development and growth. Functionally, DNA-binding protein that binds to both double-stranded and single-stranded DNA without significant sequence specificity to reversibly repress the transcriptional activity of chloroplast nucleoids by promoting DNA compaction and possibly regulate DNA replication. This Zea mays (Maize) protein is Sulfite reductase [ferredoxin], chloroplastic (SIR).